The chain runs to 309 residues: Probable manganese-dependent inorganic pyrophosphatase (309 aa).

The Mn(2+) site is built by His9, Asp13, Asp15, Asp75, His97, and Asp149.

It belongs to the PPase class C family. It depends on Mn(2+) as a cofactor.

The protein localises to the cytoplasm. The enzyme catalyses diphosphate + H2O = 2 phosphate + H(+). This chain is Probable manganese-dependent inorganic pyrophosphatase, found in Staphylococcus epidermidis (strain ATCC 35984 / DSM 28319 / BCRC 17069 / CCUG 31568 / BM 3577 / RP62A).